Reading from the N-terminus, the 459-residue chain is DNA-binding protein P3A2 (459 aa).

The interval 1-25 (MMISEDISEPSSPDTPFDDSDLLNS) is disordered.

The protein belongs to the NRF1/Ewg family.

Its subcellular location is the nucleus. Its function is as follows. Transcriptional regulator that interacts with specific sites in the control region of the cyIIIa actin gene. Also binds specifically to similar target sites located in the regulatory region of the SM50 gene. The polypeptide is DNA-binding protein P3A2 (Strongylocentrotus purpuratus (Purple sea urchin)).